A 342-amino-acid polypeptide reads, in one-letter code: Serine/threonine-protein kinase SAPK1 (342 aa).

Residues 4–260 (YEVMRDIGSG…IPEIKNHPWF (257 aa)) enclose the Protein kinase domain. ATP-binding positions include 10–18 (IGSGNFGVA) and Lys33. Asp123 acts as the Proton acceptor in catalysis. The C-terminal stretch occupies residues 253–342 (EIKNHPWFLK…ENSGDFVCAL (90 aa)).

The protein belongs to the protein kinase superfamily. Ser/Thr protein kinase family. In terms of processing, phosphorylated. In terms of tissue distribution, expressed in leaf blades, leaf sheaths and roots. Expressed in shoots and roots of young seedlings.

The enzyme catalyses L-seryl-[protein] + ATP = O-phospho-L-seryl-[protein] + ADP + H(+). The catalysed reaction is L-threonyl-[protein] + ATP = O-phospho-L-threonyl-[protein] + ADP + H(+). Its activity is regulated as follows. Activated by phosphorylation in response to hyperosmotic stress within 5 minutes. Its function is as follows. May play a role in signal transduction of hyperosmotic response. In Oryza sativa subsp. japonica (Rice), this protein is Serine/threonine-protein kinase SAPK1 (SAPK1).